The following is a 353-amino-acid chain: Photosystem II D2 protein (353 aa).

T2 is modified (N-acetylthreonine). At T2 the chain carries Phosphothreonine. Residues 41–61 (CAYFAVGGWFTGTTFVTSWYT) traverse the membrane as a helical segment. Chlorophyll a is bound at residue H118. Residues 125–141 (GFMLRQFELARSVQLRP) form a helical membrane-spanning segment. Pheophytin a-binding residues include Q130 and N143. A helical membrane pass occupies residues 153-166 (VFVSVFLIYPLGQS). H198 contributes to the chlorophyll a binding site. Residues 208–228 (AALLCAIHGATVENTLFEDGD) traverse the membrane as a helical segment. A plastoquinone is bound by residues H215 and F262. H215 is a Fe cation binding site. Position 269 (H269) interacts with Fe cation. A helical transmembrane segment spans residues 279-295 (GLWMSALGVVGLALNLR).

This sequence belongs to the reaction center PufL/M/PsbA/D family. In terms of assembly, PSII is composed of 1 copy each of membrane proteins PsbA, PsbB, PsbC, PsbD, PsbE, PsbF, PsbH, PsbI, PsbJ, PsbK, PsbL, PsbM, PsbT, PsbX, PsbY, PsbZ, Psb30/Ycf12, at least 3 peripheral proteins of the oxygen-evolving complex and a large number of cofactors. It forms dimeric complexes. The D1/D2 heterodimer binds P680, chlorophylls that are the primary electron donor of PSII, and subsequent electron acceptors. It shares a non-heme iron and each subunit binds pheophytin, quinone, additional chlorophylls, carotenoids and lipids. There is also a Cl(-1) ion associated with D1 and D2, which is required for oxygen evolution. The PSII complex binds additional chlorophylls, carotenoids and specific lipids. serves as cofactor.

The protein resides in the plastid. The protein localises to the chloroplast thylakoid membrane. The enzyme catalyses 2 a plastoquinone + 4 hnu + 2 H2O = 2 a plastoquinol + O2. Photosystem II (PSII) is a light-driven water:plastoquinone oxidoreductase that uses light energy to abstract electrons from H(2)O, generating O(2) and a proton gradient subsequently used for ATP formation. It consists of a core antenna complex that captures photons, and an electron transfer chain that converts photonic excitation into a charge separation. The D1/D2 (PsbA/PsbD) reaction center heterodimer binds P680, the primary electron donor of PSII as well as several subsequent electron acceptors. D2 is needed for assembly of a stable PSII complex. The polypeptide is Photosystem II D2 protein (Nicotiana tabacum (Common tobacco)).